Consider the following 424-residue polypeptide: Dihydroorotase (424 aa).

2 residues coordinate Zn(2+): histidine 60 and histidine 62. Substrate contacts are provided by residues 62-64 (HFR) and asparagine 94. Aspartate 151, histidine 178, and histidine 231 together coordinate Zn(2+). Asparagine 277 contributes to the substrate binding site. Residue aspartate 304 participates in Zn(2+) binding. Aspartate 304 is a catalytic residue. A substrate-binding site is contributed by histidine 308.

Belongs to the metallo-dependent hydrolases superfamily. DHOase family. Class I DHOase subfamily. Zn(2+) is required as a cofactor.

It carries out the reaction (S)-dihydroorotate + H2O = N-carbamoyl-L-aspartate + H(+). It participates in pyrimidine metabolism; UMP biosynthesis via de novo pathway; (S)-dihydroorotate from bicarbonate: step 3/3. Functionally, catalyzes the reversible cyclization of carbamoyl aspartate to dihydroorotate. This chain is Dihydroorotase, found in Clostridium acetobutylicum (strain ATCC 824 / DSM 792 / JCM 1419 / IAM 19013 / LMG 5710 / NBRC 13948 / NRRL B-527 / VKM B-1787 / 2291 / W).